A 334-amino-acid chain; its full sequence is MLNTLIVGASGYAGAELVTYVNRHPHMNITALTVSAQSNDAGKLISDLHPQLKGIVELPLQPMSDISEFSPGVDVVFLATAHEVSHDLAPQFLEAGCVVFDLSGAFRVNDATFYEKYYGFTHQYPELLEQAAYGLAEWCGNKLKEANLIAVPGCYPTAAQLALKPLIDADLLDLNQWPVINATSGVSGAGRKAAISNSFCEVSLQPYGVFTHRHQPEIATHLGADVIFTPHLGNFPRGILETITCRLKSGVTQAQVAQALQQAYAHKPLVRLYDKGVPALKNVVGLPFCDIGFAVQGEHLIIVATEDNLLKGAAAQAVQCANIRFGYAETQSLI.

The active site involves cysteine 154.

It belongs to the NAGSA dehydrogenase family. Type 1 subfamily.

The protein resides in the cytoplasm. It catalyses the reaction N-acetyl-L-glutamate 5-semialdehyde + phosphate + NADP(+) = N-acetyl-L-glutamyl 5-phosphate + NADPH + H(+). It participates in amino-acid biosynthesis; L-arginine biosynthesis; N(2)-acetyl-L-ornithine from L-glutamate: step 3/4. Catalyzes the NADPH-dependent reduction of N-acetyl-5-glutamyl phosphate to yield N-acetyl-L-glutamate 5-semialdehyde. This Shigella flexneri protein is N-acetyl-gamma-glutamyl-phosphate reductase.